Consider the following 493-residue polypeptide: NADH-ubiquinone oxidoreductase 51 kDa subunit, mitochondrial (493 aa).

Residues 1–27 constitute a mitochondrion transit peptide; the sequence is MLSRTAAPTKASARTLSRAAAEQCRTF. 96–105 serves as a coordination point for NAD(+); it reads GRGGAGFPSG. Residue 212 to 259 participates in FMN binding; it reads GAGAYVCGEETSLIESLEGKPGKPRLKPPFPAAVGLFGCPSTVANVET. [4Fe-4S] cluster-binding residues include C391, C394, C397, and C437.

This sequence belongs to the complex I 51 kDa subunit family. As to quaternary structure, complex I is composed of about 40 different subunits. This is a component of the flavoprotein-sulfur (FP) fragment of the enzyme. The cofactor is FMN. It depends on [4Fe-4S] cluster as a cofactor.

It localises to the mitochondrion inner membrane. It catalyses the reaction a ubiquinone + NADH + 5 H(+)(in) = a ubiquinol + NAD(+) + 4 H(+)(out). Functionally, core subunit of the mitochondrial membrane respiratory chain NADH dehydrogenase (Complex I) that is believed to belong to the minimal assembly required for catalysis. Complex I functions in the transfer of electrons from NADH to the respiratory chain. The immediate electron acceptor for the enzyme is believed to be ubiquinone. This is NADH-ubiquinone oxidoreductase 51 kDa subunit, mitochondrial (nuo-51) from Neurospora crassa (strain ATCC 24698 / 74-OR23-1A / CBS 708.71 / DSM 1257 / FGSC 987).